Consider the following 2925-residue polypeptide: MWDPRAARVPPRDLAVLLCNKSNAFFSLGKWNEAFVAAKECLQWDPTYVKGYYRAGYSLLRLHQPYEAARMFFEGLRLVQRSQDQAPVADFLVGVFTTMSSDSIVLQSFLPCFDHIFTTGFPTEVWQSVIEKLAKKGLWHSFLLLSAKKDRLPRNIHVPELSLKSLFEKYVFIGLYEKMEQVPKLVQWLISIGASVETIGPYPLHALMRLCIQARENHLFRWLMDHKPEWKGRINQKDGDGCTVLHVVAAHSPGYLVKRQTEDVQMLLRFGADPTLLDRQSRSVVDVLKRNKNFKAIEKINSHLEKLATCSKDLSGFSNGDGPTSENDIFRKVLEQLVKYMNSGNRLLHKNFLKQEVVQRFLRLLSTLQEIPPDLVCDINQDCATTVFKFLLEKQRWPEVLLLLTRKVSGEPPLGDCLIKDCNFSDLDICTIIPHLSTWDQRKKQLLGCLIDSGALPDGLQESQERPVVTCLKHEDFELAFLLLTKGADPRAISLTEGDTPLHAALHIFLEIKADIGFSFLSHLLDLFWSNPTEFDYLNPNVQDSNGNTLMHILFQKGMLKRVKKLLDLLVKFDINFNLKNKEGKDARHRIKKNDSLLLAWNKALMENRRRSRQDSAAHLGKLSKSTAPGHTSQLKSQGSFKSVPCGATARTLPEGSAVPDSWETLPGTQVTRKEPGALRPCSLRDCLMQDITVLIQQVEVDPSFPEDCLQSSEPLEAGAGKEGKKDDKPTLGAGAPDCSEVGEGHAQVGLGALQLVPDDNRGKEGNDDQDDWSTQEIEACLQDFDNMTWEIECTSEMLKKLSSKVMTKVIKKKIILAIQQLGNGEWTQGLQKRLKHLKGSIQLFEAKLDKGARMLWELAIDFSPRCSENPEKIIATEQNTCAMEKSGRIYTEIIRIWDIVLDHCKLADSIKAICNAYNRGLSCVLRKKLKGINKGQVSANMKIQKRIPRCYVEDTEAEKGREHVNPEYFPPASAVETEYNIMKFHSFSTNMAFNILNDTTATVEYPFRVGELEYAVIDLNPRPLEPIILIGRSGTGKTTCCLYRLWKKFHVYWEKAEQAGSPLLAKQVWLKRRLEVEPGKESPGGEEEEEEEDEEEEDSIEVETVESIDEQEYEACAGGAGVEPAGDGQAAEVCAPEHPHQLEHLHQIFVTKNHVLCQEVQRNFIELSKSTKATSHYKPLDPNIHKLQDLRDENFPLFVTSKQLLLLLDASLPKPFFLRNEDGSLKRTIIGWSAQEESTIPSWQEDEEEAEVDGDYSEEDKAVEMRTGDSDPRVYVTFEVFKNEIWPKMTKGRTAYNPALIWKEIKSFLKGSFEALSCPHGRLTEEVYKKLGRKRCPNFKEDRSEIYSLFSLYQQIRSQKGYFDEEDVLYNISRRLSKLRVLPWSIHELYGDEIQDFTQAELALLMKCINDPNSMFLTGDTAQSIMKGVAFRFSDLRSLFHYASRNTIDKQCAVRKPKKIHQLYQNYRSHSGILNLASGVVDLLQFYFPESFDRLPRDSGLFDGPKPTVLESCSVSDLAILLRGNKRKTQPIEFGAHQVILVANETAKEKIPEELGLALVLTIYEAKGLEFDDVLLYNFFTDSEAYKEWKIISSFTPTSTDSREENRPLVEVPLDKPGSSQGRSLMVNPEMYKLLNGELKQLYTAITRARVNLWIFDENREKRAPAFKYFIRRDFVQVVKTDENKDFDDSMFVKTSTPAEWIAQGDYYAKHQCWKVAAKCYQKGGAFEKEKLALAHDTALSMKSKKVSPKEKQLEYLELAKTYLECKEPTLSLKCLSYAKEFQLSAQLCERLGKIRDAAYFYKRSQCYKDAFRCFEQIQEFDLALKMYCQEELFEEAAIAVEKYEEMLKTKTLPISKLSYSASQFYLEAAAKYLSANKMKEMMAVLSKLDIEDQLVFLKSRKRLAEAADLLNREGRREEAALLMKQHGCLLEAARLTADKDFQASCLLGAARLNVARDSDIEHTKDILREALDICYQTGQLSGIAEAHFLQGVILRDFQKLRDAFFKFDTLNHSAGVVEALYEAASQCEAEPEKILGLAPGGLEILLSLVRALKRVTNNAEKEMVKSCFEFFGISQVDAKYCQIAQNDPGPILRIIFDLDLNLREKKTKDHFLIMTDQVKLALNKHLLGRLCQITRSLLGKTYRGVCMRFIVGLKCEDENCEHFHRPLRRCEAKCLVQSKMNLVAINGLLLEAKKVFPKILAEELKEIDYILSTDMYGLCKSILDVLFPKHFHQRVLSENPMACKEILKPNYKSFRFYRFALKEYIHFLFENESARNRRESTDLWLSAMQAFLLSSNYPEEFEKLLHQEEDNYNRELKALESEKDERGRGRGSRIKGIEGKFGMLAPNRDDENMDKTHLCFIRLLENCIDQFYVYRNPEDYKRLFFRFMNVLIKRCKEPLIPSIGNTVALLEFQFIHCGVVLARLWKNVILCLPKSYIALLHYWEFLFSKKDKELGDVFSIIQEYKPKDVTRAIQDFRFHLSYLAKVLCGYENVNFNVLLDAFSEIDYVVSGEAERTLVLCLVMLVNAEEILQPYCKPLLYRHFREIESRLQLMSMDCPGQVPERLLKVVKRVLVAVNVKSVAEALQDLLFERDEEYLMDCDWRWDPVHTKGSIVRGLYYEEVRLNRLLCLDPVDYFAEPECEFGQDEMDELALEDRDHVLATILSQKQRKASIQRKLRRACLVVSLCISWRRRVGTQMERVREEAREPRAGNFKKADVDRTQCDLCGVKFTRGPENYFSPSKAFEGAASEVAVLSRAELEREECQERNSESYEQHIHLEHHQRQQVAYQKYSEFFHEKVDPAIDEGKLVVQDIEQSVWIHSHVGSKEHSHMLQKVQEHIKRVSDMVEDLYRRKAWAGAEEAMTRLVNILILSVRDARDWLMKTETRLKKEGIVQEDDYENEVEDFGELRPRRRSRKCGKQRKY.

2 TPR repeats span residues 15 to 48 (AVLLCNKSNAFFSLGKWNEAFVAAKECLQWDPTY) and 50 to 82 (KGYYRAGYSLLRLHQPYEAARMFFEGLRLVQRS). 6 ANK repeats span residues 168-198 (EKYVFIGLYEKMEQVPKLVQWLISIGASVET), 203-232 (PLHALMRLCIQARENHLFRWLMDHKPEWKG), 240-276 (DGCTVLHVVAAHSPGYLVKRQTEDVQMLLRFGADPTL), 463-492 (SQERPVVTCLKHEDFELAFLLLTKGADPRA), 497-518 (EGDTPLHAALHIFLEIKADIGF), and 546-575 (NGNTLMHILFQKGMLKRVKKLLDLLVKFDI). Disordered stretches follow at residues 612 to 669 (SRQD…LPGT), 706 to 741 (PEDCLQSSEPLEAGAGKEGKKDDKPTLGAGAPDCSE), and 1077 to 1103 (VEPGKESPGGEEEEEEEDEEEEDSIEV). Residues 624 to 641 (SKSTAPGHTSQLKSQGSF) are compositionally biased toward polar residues. The span at 720 to 730 (AGKEGKKDDKP) shows a compositional bias: basic and acidic residues. A compositionally biased stretch (acidic residues) spans 1085-1103 (GGEEEEEEEDEEEEDSIEV). 2 TPR repeats span residues 1699 to 1732 (PAEWIAQGDYYAKHQCWKVAAKCYQKGGAFEKEK) and 1793 to 1826 (LGKIRDAAYFYKRSQCYKDAFRCFEQIQEFDLAL). The stretch at 2301-2330 (EEFEKLLHQEEDNYNRELKALESEKDERGR) forms a coiled coil.

This is TPR and ankyrin repeat-containing protein 1 (TRANK1) from Homo sapiens (Human).